Here is a 30-residue protein sequence, read N- to C-terminus: Varv peptide G (30 aa).

Positions 1–30 form a cross-link, cyclopeptide (Gly-Asn); sequence GVPVCGETCFGGTCNTPGCSCDPWPVCSRN. 3 disulfides stabilise this stretch: Cys-5–Cys-19, Cys-9–Cys-21, and Cys-14–Cys-27.

In terms of processing, this is a cyclic peptide.

Its function is as follows. Probably participates in a plant defense mechanism. The sequence is that of Varv peptide G from Viola arvensis (European field pansy).